Reading from the N-terminus, the 409-residue chain is Alpha-1-antitrypsin (409 aa).

A signal peptide spans 1–15; sequence LLLAGLCCLLPGSLA. Residues 18–39 are disordered; sequence PQGDAAQKTDTPPHDQNHPTLN. N-linked (GlcNAc...) asparagine glycans are attached at residues Asn61, Asn98, Asn136, and Asn262. Residues 364–383 form an RCL region; the sequence is GAMFLEAIPMSIPPEVKFNK. Residue Ser374 is modified to Phosphoserine.

It belongs to the serpin family. As to quaternary structure, interacts with CELA2A. Interacts with ERGIC3 and LMAN1/ERGIC53. Interacts with PRSS1/Trypsin. As to expression, plasma.

The protein resides in the secreted. In terms of biological role, inhibitor of serine proteases. Its primary target is elastase, but it also has a moderate affinity for plasmin and thrombin. Inhibits trypsin, chymotrypsin and plasminogen activator. This chain is Alpha-1-antitrypsin (SERPINA1), found in Papio anubis (Olive baboon).